The sequence spans 262 residues: tRNA pseudouridine synthase A (262 aa).

The active-site Nucleophile is the Asp-51. Residue Tyr-106 participates in substrate binding.

Belongs to the tRNA pseudouridine synthase TruA family.

It catalyses the reaction uridine(38/39/40) in tRNA = pseudouridine(38/39/40) in tRNA. In terms of biological role, formation of pseudouridine at positions 38, 39 and 40 in the anticodon stem and loop of transfer RNAs. This Pyrococcus horikoshii (strain ATCC 700860 / DSM 12428 / JCM 9974 / NBRC 100139 / OT-3) protein is tRNA pseudouridine synthase A.